The primary structure comprises 453 residues: NADH-quinone oxidoreductase subunit D (453 aa).

Basic and acidic residues predominate over residues 1–21; the sequence is MKDTETRPGRHRAPEPAHPEQ. Positions 1–30 are disordered; sequence MKDTETRPGRHRAPEPAHPEQPDTTGDTVV.

The protein belongs to the complex I 49 kDa subunit family. In terms of assembly, NDH-1 is composed of 14 different subunits. Subunits NuoB, C, D, E, F, and G constitute the peripheral sector of the complex.

The protein localises to the cell membrane. It catalyses the reaction a quinone + NADH + 5 H(+)(in) = a quinol + NAD(+) + 4 H(+)(out). Its function is as follows. NDH-1 shuttles electrons from NADH, via FMN and iron-sulfur (Fe-S) centers, to quinones in the respiratory chain. The immediate electron acceptor for the enzyme in this species is believed to be a menaquinone. Couples the redox reaction to proton translocation (for every two electrons transferred, four hydrogen ions are translocated across the cytoplasmic membrane), and thus conserves the redox energy in a proton gradient. This chain is NADH-quinone oxidoreductase subunit D, found in Nocardia farcinica (strain IFM 10152).